The sequence spans 791 residues: FHF complex subunit HOOK-interacting protein 1B (791 aa).

Disordered stretches follow at residues 465 to 510 and 524 to 556; these read APSP…VPRP and SLGG…SPAE. Ser467 carries the phosphoserine modification. The segment covering 496–510 has biased composition (low complexity); sequence SPSVDSSSVVTVPRP. A phosphoserine mark is found at Ser524, Ser537, Ser543, Ser547, and Ser679. Residues 541–552 show a composition bias toward low complexity; that stretch reads TASPTSSPGRRP. A Phosphothreonine modification is found at Thr708. Ser716 is subject to Phosphoserine.

It belongs to the FHIP family. As to quaternary structure, component of the FTS/Hook/FHIP complex (FHF complex), composed of AKTIP/FTS, FHIP1B, and one or more members of the Hook family of proteins HOOK1, HOOK2, and HOOK3. The FHF complex associates with the homotypic vesicular sorting complex (the HOPS complex).

Its function is as follows. Component of the FTS/Hook/FHIP complex (FHF complex). The FHF complex may function to promote vesicle trafficking and/or fusion via the homotypic vesicular protein sorting complex (the HOPS complex). FHF complex promotes the distribution of AP-4 complex to the perinuclear area of the cell. This chain is FHF complex subunit HOOK-interacting protein 1B (Fhip1b), found in Rattus norvegicus (Rat).